Reading from the N-terminus, the 505-residue chain is 2,3-bisphosphoglycerate-independent phosphoglycerate mutase (505 aa).

Mn(2+)-binding residues include Asp12 and Ser62. Ser62 serves as the catalytic Phosphoserine intermediate. Residues His123, 153-154, Arg185, Arg191, 257-260, and Lys330 each bind substrate; these read RD and RPDR. Asp397, His401, Asp438, His439, and His456 together coordinate Mn(2+).

The protein belongs to the BPG-independent phosphoglycerate mutase family. In terms of assembly, monomer. Mn(2+) serves as cofactor.

The enzyme catalyses (2R)-2-phosphoglycerate = (2R)-3-phosphoglycerate. It functions in the pathway carbohydrate degradation; glycolysis; pyruvate from D-glyceraldehyde 3-phosphate: step 3/5. Its function is as follows. Catalyzes the interconversion of 2-phosphoglycerate and 3-phosphoglycerate. The chain is 2,3-bisphosphoglycerate-independent phosphoglycerate mutase from Staphylococcus aureus (strain Mu50 / ATCC 700699).